The sequence spans 249 residues: 2,3-bisphosphoglycerate-dependent phosphoglycerate mutase (249 aa).

Residues 9–16 (RHGQSQWN), 22–23 (TG), Arg-61, 88–91 (ERHY), Lys-99, 115–116 (RR), and 184–185 (GN) each bind substrate. His-10 acts as the Tele-phosphohistidine intermediate in catalysis. Residue Glu-88 is the Proton donor/acceptor of the active site.

Belongs to the phosphoglycerate mutase family. BPG-dependent PGAM subfamily. As to quaternary structure, homodimer.

The catalysed reaction is (2R)-2-phosphoglycerate = (2R)-3-phosphoglycerate. The protein operates within carbohydrate degradation; glycolysis; pyruvate from D-glyceraldehyde 3-phosphate: step 3/5. Functionally, catalyzes the interconversion of 2-phosphoglycerate and 3-phosphoglycerate. The chain is 2,3-bisphosphoglycerate-dependent phosphoglycerate mutase from Xanthomonas campestris pv. campestris (strain B100).